A 146-amino-acid chain; its full sequence is Probable calcium-binding protein CML32 (146 aa).

EF-hand domains are found at residues 1 to 33 (MSVAEIFERVDKNKDGKISWDEFAEAIRAFSPS), 34 to 69 (ITSEEIDNMFREIDVDGDNQIDVAEYASCLMLGGEG), 73 to 108 (DEDIVMKEAFDLYDIDGDGKISASEIHVVLKRLGEK), and 109 to 144 (QTIAECIAMVRAVDADGDGFVSFEEFKTMMSCNNKK). 19 residues coordinate Ca(2+): Asp-11, Asn-13, Asp-15, Lys-17, Glu-22, Asp-47, Asp-49, Asp-51, Gln-53, Glu-58, Asp-86, Asp-88, Asp-90, Lys-92, Glu-97, Asp-122, Asp-124, Asp-126, and Glu-133.

Potential calcium sensor. The protein is Probable calcium-binding protein CML32 (CML32) of Arabidopsis thaliana (Mouse-ear cress).